Here is a 325-residue protein sequence, read N- to C-terminus: Putative carboxypeptidase YocD (325 aa).

Serine 111 (nucleophile) is an active-site residue. Catalysis depends on charge relay system residues glutamate 228 and histidine 296.

Belongs to the peptidase S66 family.

This Bacillus subtilis (strain 168) protein is Putative carboxypeptidase YocD (yocD).